A 289-amino-acid chain; its full sequence is 5'-3' exonuclease (289 aa).

A 5'-3' exonuclease domain is found at 166-256 (VEPQKIPDYL…EEDLKIKRPD (91 aa)).

5'-3' exonuclease acting preferentially on double-stranded DNA. In Aquifex aeolicus (strain VF5), this protein is 5'-3' exonuclease.